The primary structure comprises 189 residues: Protein GrpE (189 aa).

The segment at 1–24 (MADEQTVDTQNPEANQAPEASGDD) is disordered.

Belongs to the GrpE family. As to quaternary structure, homodimer.

The protein resides in the cytoplasm. Functionally, participates actively in the response to hyperosmotic and heat shock by preventing the aggregation of stress-denatured proteins, in association with DnaK and GrpE. It is the nucleotide exchange factor for DnaK and may function as a thermosensor. Unfolded proteins bind initially to DnaJ; upon interaction with the DnaJ-bound protein, DnaK hydrolyzes its bound ATP, resulting in the formation of a stable complex. GrpE releases ADP from DnaK; ATP binding to DnaK triggers the release of the substrate protein, thus completing the reaction cycle. Several rounds of ATP-dependent interactions between DnaJ, DnaK and GrpE are required for fully efficient folding. In Pseudomonas fluorescens (strain Pf0-1), this protein is Protein GrpE.